Consider the following 467-residue polypeptide: MEKISRTKIVDLMKREDFGAMVNVKGWVRTRRGSKQVNFIALNDGSTINNVQVVVDLANFDEEMLKQITTGACLSVNGVLTESVGAGQKAEVQAREIEVLGTCDNTYPLQKKGHSMEFLREIAHLRPRTNTFGAVFRIRHNMAIAIHKFFHEKGFFYFHTPIITASDCEGAGQMFQVTTMNLYDLKKDANGSIVYDDDFFGKQASLTVSGQLEGELAATALGAIYTFGPTFRAENSNTPRHLAEFWMIEPEVAFNEIQENMDLAEEFIKYCVRWALDNCADDVKFLNDMFDKGLIERLEGVLKEDFVRLPYTEGIKILEEAVAKGHKFEFPVYWGVDLASEHERYLVEDHFKRPVILTDYPKEIKAFYMKQNEDGKTVRAMDVLFPKIGEIIGGSERESDYNKLMTRIEEMHIPMKDMWWYLDTRKFGTCPHSGFGLGFERLLLFVTGMSNIRDVIPFPRTPRNADF.

Belongs to the class-II aminoacyl-tRNA synthetase family. In terms of assembly, homodimer.

It is found in the cytoplasm. It carries out the reaction tRNA(Asn) + L-asparagine + ATP = L-asparaginyl-tRNA(Asn) + AMP + diphosphate + H(+). This chain is Asparagine--tRNA ligase, found in Bacteroides fragilis (strain ATCC 25285 / DSM 2151 / CCUG 4856 / JCM 11019 / LMG 10263 / NCTC 9343 / Onslow / VPI 2553 / EN-2).